We begin with the raw amino-acid sequence, 115 residues long: Con-Ins G1c (115 aa).

Positions 1-24 (MTTSFYFLLMALGLLLYVCQSSFG) are cleaved as a signal peptide. A propeptide spanning residues 25-29 (NQHTR) is cleaved from the precursor. Pro-34 carries the 4-hydroxyproline; partial modification. Disulfide bonds link Cys-38/Cys-101, Cys-50/Cys-114, and Cys-100/Cys-105. 4-carboxyglutamate is present on Glu-41. Residues 53–94 (KRNDAGKKRGRASPLWQRRGSLSQLKARAKRNGAFHLPRDGR) constitute a propeptide, c peptide. Glu-98 bears the 4-carboxyglutamate mark. Pro-104 is modified (4-hydroxyproline; partial). Position 109 is a 4-carboxyglutamate; partial (Glu-109).

It belongs to the insulin family. As to quaternary structure, heterodimer of A and B chains; disulfide-linked. Is different from Con-Ins G1a (AC A0A0B5AC95) due to absence of amidation at Cys-114. Expressed by the venom gland.

Its subcellular location is the secreted. This venom insulin, from a fish-hunting cone snail, facilitates prey capture by rapidly inducing hypoglycemic shock. It is one of the smallest known insulin found in nature and lacks the C-terminal segment of the B chain that, in human insulin, mediates engagement of the insulin receptor (INSR) and assembly of the hormone's hexameric storage form. Despite lacking this segment, it both binds and activates human insulin receptor (long isoform (HIR-B)) with only a 10-fold lower potency. In vivo, intraperitoneal injection of this peptide into zebrafish lowers blood glucose with the same potency than human insulin. In addition, when applied to water, this peptide reduces overall locomotor activity of zebrafish larvae, observed as a significant decrease in the percentage of time spent swimming and movement frequency. This is Con-Ins G1c from Conus geographus (Geography cone).